We begin with the raw amino-acid sequence, 266 residues long: Undecaprenyl-diphosphatase (266 aa).

A run of 8 helical transmembrane segments spans residues 1-21, 39-59, 87-107, 115-135, 144-164, 183-203, 218-238, and 246-266; these read MDTF…FLPI, QGLS…VMYF, WWII…KDFI, AVIA…DRMF, VGWK…IPGT, AAAR…AILV, ALSL…HLFL, and MTPF…FMFA.

This sequence belongs to the UppP family.

The protein localises to the cell inner membrane. The enzyme catalyses di-trans,octa-cis-undecaprenyl diphosphate + H2O = di-trans,octa-cis-undecaprenyl phosphate + phosphate + H(+). In terms of biological role, catalyzes the dephosphorylation of undecaprenyl diphosphate (UPP). Confers resistance to bacitracin. The chain is Undecaprenyl-diphosphatase from Shewanella sediminis (strain HAW-EB3).